The primary structure comprises 217 residues: ATP-dependent Clp protease proteolytic subunit (217 aa).

The active-site Nucleophile is the serine 120. Histidine 145 is a catalytic residue.

This sequence belongs to the peptidase S14 family. Fourteen ClpP subunits assemble into 2 heptameric rings which stack back to back to give a disk-like structure with a central cavity, resembling the structure of eukaryotic proteasomes.

It localises to the cytoplasm. It carries out the reaction Hydrolysis of proteins to small peptides in the presence of ATP and magnesium. alpha-casein is the usual test substrate. In the absence of ATP, only oligopeptides shorter than five residues are hydrolyzed (such as succinyl-Leu-Tyr-|-NHMec, and Leu-Tyr-Leu-|-Tyr-Trp, in which cleavage of the -Tyr-|-Leu- and -Tyr-|-Trp bonds also occurs).. Functionally, cleaves peptides in various proteins in a process that requires ATP hydrolysis. Has a chymotrypsin-like activity. Plays a major role in the degradation of misfolded proteins. This Ralstonia nicotianae (strain ATCC BAA-1114 / GMI1000) (Ralstonia solanacearum) protein is ATP-dependent Clp protease proteolytic subunit.